The primary structure comprises 760 residues: 5-methyltetrahydropteroyltriglutamate--homocysteine methyltransferase (760 aa).

5-methyltetrahydropteroyltri-L-glutamate-binding positions include 17-20 (RELK) and lysine 118. L-homocysteine is bound by residues 434-436 (IGS) and glutamate 487. L-methionine contacts are provided by residues 434–436 (IGS) and glutamate 487. 5-methyltetrahydropteroyltri-L-glutamate-binding positions include 518 to 519 (RC) and tryptophan 564. An L-homocysteine-binding site is contributed by aspartate 602. Residue aspartate 602 participates in L-methionine binding. Glutamate 608 contributes to the 5-methyltetrahydropteroyltri-L-glutamate binding site. Residues histidine 644, cysteine 646, and glutamate 668 each coordinate Zn(2+). Histidine 697 (proton donor) is an active-site residue. Cysteine 729 is a binding site for Zn(2+).

This sequence belongs to the vitamin-B12 independent methionine synthase family. The cofactor is Zn(2+).

The catalysed reaction is 5-methyltetrahydropteroyltri-L-glutamate + L-homocysteine = tetrahydropteroyltri-L-glutamate + L-methionine. Its pathway is amino-acid biosynthesis; L-methionine biosynthesis via de novo pathway; L-methionine from L-homocysteine (MetE route): step 1/1. In terms of biological role, catalyzes the transfer of a methyl group from 5-methyltetrahydrofolate to homocysteine resulting in methionine formation. The chain is 5-methyltetrahydropteroyltriglutamate--homocysteine methyltransferase from Buchnera aphidicola subsp. Cinara cedri (strain Cc).